The sequence spans 250 residues: Phosphoribosylaminoimidazole-succinocarboxamide synthase (250 aa).

This sequence belongs to the SAICAR synthetase family.

It catalyses the reaction 5-amino-1-(5-phospho-D-ribosyl)imidazole-4-carboxylate + L-aspartate + ATP = (2S)-2-[5-amino-1-(5-phospho-beta-D-ribosyl)imidazole-4-carboxamido]succinate + ADP + phosphate + 2 H(+). It functions in the pathway purine metabolism; IMP biosynthesis via de novo pathway; 5-amino-1-(5-phospho-D-ribosyl)imidazole-4-carboxamide from 5-amino-1-(5-phospho-D-ribosyl)imidazole-4-carboxylate: step 1/2. The chain is Phosphoribosylaminoimidazole-succinocarboxamide synthase from Bifidobacterium longum (strain DJO10A).